The primary structure comprises 103 residues: Large ribosomal subunit protein bL21 (103 aa).

The protein belongs to the bacterial ribosomal protein bL21 family. As to quaternary structure, part of the 50S ribosomal subunit. Contacts protein L20.

This protein binds to 23S rRNA in the presence of protein L20. This is Large ribosomal subunit protein bL21 from Pseudomonas fluorescens (strain Pf0-1).